An 896-amino-acid polypeptide reads, in one-letter code: Desmocollin-3 (896 aa).

The first 27 residues, 1-27 (MAAAGPRRSVRGAVCLHLLLTLVIFSR), serve as a signal peptide directing secretion. A propeptide spanning residues 28 to 135 (AGEACKKVIL…RETVLRRAKR (108 aa)) is cleaved from the precursor. 5 Cadherin domains span residues 136 to 243 (RWAP…HPVF), 244 to 355 (TEAI…APTF), 356 to 471 (RQNA…GPEC), 472 to 579 (TPAA…EILQ), and 580 to 690 (EYVV…ILGK). Residues 136-690 (RWAPIPCSMQ…SRSTGVILGK (555 aa)) are Extracellular-facing. Residue asparagine 166 is glycosylated (N-linked (GlcNAc...) asparagine). N-linked (GlcNAc...) asparagine glycans are attached at residues asparagine 392, asparagine 546, and asparagine 629. The chain crosses the membrane as a helical span at residues 691 to 711 (WAILAILLGIALLFSVLLTLV). At 712 to 896 (CGVFGATKGK…ITLAEACTKR (185 aa)) the chain is on the cytoplasmic side.

May form homodimers. Interacts with DSG1; there is evidence to suggest that the interaction promotes cell-cell adhesion of keratinocytes. Expressed throughout the basal and spinous layer of the epidermis with weak expression in the granular layer (at protein level). Also expressed in the buccal mucosa, esophagus and cervix (at protein level).

It is found in the cell membrane. The protein resides in the cell junction. It localises to the desmosome. The protein localises to the cytoplasm. Its function is as follows. A component of desmosome cell-cell junctions which are required for positive regulation of cellular adhesion. Required for cell-cell adhesion in the epidermis, as a result required for the maintenance of the dermal cohesion and the dermal barrier function. Required for cell-cell adhesion of epithelial cell layers surrounding the telogen hair club, as a result plays an important role in telogen hair shaft anchorage. Essential for successful completion of embryo compaction and embryo development. The sequence is that of Desmocollin-3 (DSC3) from Homo sapiens (Human).